The following is a 256-amino-acid chain: Thiazole synthase (256 aa).

Residue K95 is the Schiff-base intermediate with DXP of the active site. 1-deoxy-D-xylulose 5-phosphate is bound by residues G156, 182 to 183, and 204 to 205; these read AG and NT.

The protein belongs to the ThiG family. Homotetramer. Forms heterodimers with either ThiH or ThiS.

The protein localises to the cytoplasm. It catalyses the reaction [ThiS sulfur-carrier protein]-C-terminal-Gly-aminoethanethioate + 2-iminoacetate + 1-deoxy-D-xylulose 5-phosphate = [ThiS sulfur-carrier protein]-C-terminal Gly-Gly + 2-[(2R,5Z)-2-carboxy-4-methylthiazol-5(2H)-ylidene]ethyl phosphate + 2 H2O + H(+). It participates in cofactor biosynthesis; thiamine diphosphate biosynthesis. Its function is as follows. Catalyzes the rearrangement of 1-deoxy-D-xylulose 5-phosphate (DXP) to produce the thiazole phosphate moiety of thiamine. Sulfur is provided by the thiocarboxylate moiety of the carrier protein ThiS. In vitro, sulfur can be provided by H(2)S. This is Thiazole synthase from Cronobacter sakazakii (strain ATCC BAA-894) (Enterobacter sakazakii).